Consider the following 814-residue polypeptide: Testis-specific zinc finger protein topi (814 aa).

10 C2H2-type zinc fingers span residues 228–250 (NECT…MEKH), 275–297 (VKCN…GLIH), 360–382 (LQCE…SASH), 429–453 (FVCN…TSFH), 467–490 (LPCD…EEKH), 511–533 (YLCD…LRFH), 539–564 (FVCQ…RKCH), 570–592 (YLCL…RLIH), 598–620 (YECE…QRIH), and 626–649 (YSCL…RARH). Positions 669-705 (TAAAQKAQSHNPEQQDNDVAGGASTSDVPSGSGFMST) are disordered. The span at 691-705 (ASTSDVPSGSGFMST) shows a compositional bias: polar residues.

Interacts with comr. Expressed in testis; primary spermatocytes.

Its subcellular location is the nucleus. Functionally, required for male meiotic division and spermatid differentiation. Required for accumulation of aly and comr on chromatin. May function as a transcription factor. The chain is Testis-specific zinc finger protein topi (topi) from Drosophila melanogaster (Fruit fly).